The chain runs to 196 residues: Nitrogen regulatory protein P-II homolog (196 aa).

Residues 1–61 (MAASMTKPIS…NNSRVLPVVS (61 aa)) constitute a chloroplast transit peptide. ATP contacts are provided by residues 108–112 (GFGAQ) and 161–164 (GDGK). Mg(2+) is bound at residue G110.

The protein belongs to the P(II) protein family. In terms of assembly, homodimer. Interacts with NAGK. Interaction with NAGK is dependent of MgATP and inhibited by 2-oxoglutarate, arginine, glutamate, citrate, and oxaloacetate.

The protein localises to the plastid. It is found in the chloroplast. In terms of biological role, participates in sensing carbon and organic nitrogen status and regulates some steps of primary carbon and nitrogen metabolism. Required for nitrite uptake in chloroplasts and regulates arginine biosynthesis through interaction with acetylglutamate kinase (NAGK) in chloroplasts. Regulates fatty acids synthesis in chloroplasts by interacting with the acetyl-CoA carboxylase complex and inhibiting acetyl-CoA carboxylase (ACCase) activity. The chain is Nitrogen regulatory protein P-II homolog (GLB1) from Arabidopsis thaliana (Mouse-ear cress).